An 88-amino-acid chain; its full sequence is Probable Fe(2+)-trafficking protein (88 aa).

The protein belongs to the Fe(2+)-trafficking protein family.

Could be a mediator in iron transactions between iron acquisition and iron-requiring processes, such as synthesis and/or repair of Fe-S clusters in biosynthetic enzymes. This Teredinibacter turnerae (strain ATCC 39867 / T7901) protein is Probable Fe(2+)-trafficking protein.